A 429-amino-acid polypeptide reads, in one-letter code: Serine hydroxymethyltransferase (429 aa).

120-122 contributes to the (6S)-5,6,7,8-tetrahydrofolate binding site; sequence GHI. Lys-226 bears the N6-(pyridoxal phosphate)lysine mark.

This sequence belongs to the SHMT family. Homodimer. Requires pyridoxal 5'-phosphate as cofactor.

It is found in the cytoplasm. The catalysed reaction is 5,10-methylenetetrahydromethanopterin + glycine + H2O = 5,6,7,8-tetrahydromethanopterin + L-serine. The enzyme catalyses L-allo-threonine = acetaldehyde + glycine. It functions in the pathway amino-acid biosynthesis; glycine biosynthesis; glycine from L-serine: step 1/1. Functionally, catalyzes the reversible interconversion of serine and glycine with tetrahydromethanopterin (H4MPT) serving as the one-carbon carrier. The use of tetrahydrofolate (THF or H4PteGlu) as the pteridine substrate is 450-fold less efficient than that of H4MPT. Also exhibits a pteridine-independent aldolase activity toward beta-hydroxyamino acids, producing glycine and aldehydes, via a retro-aldol mechanism. Thus, is able to catalyze the cleavage of L-allo-threonine and L-threo-beta-phenylserine. The sequence is that of Serine hydroxymethyltransferase from Methanocaldococcus jannaschii (strain ATCC 43067 / DSM 2661 / JAL-1 / JCM 10045 / NBRC 100440) (Methanococcus jannaschii).